Reading from the N-terminus, the 99-residue chain is MMMNAFFPAMALIVLVGCSTPPPVQKAQRVKVDPLRSLNMEALCKDQAAKRYNTGEQKIDVTAFEQFQGSYEMRGYTFRKEQFVCSFDADGHFLHLSMR.

The first 17 residues, 1 to 17, serve as a signal peptide directing secretion; sequence MMMNAFFPAMALIVLVG. The N-palmitoyl cysteine moiety is linked to residue Cys-18. Cys-18 carries the S-diacylglycerol cysteine lipid modification.

The protein localises to the cell membrane. This is an uncharacterized protein from Escherichia coli (strain UTI89 / UPEC).